We begin with the raw amino-acid sequence, 219 residues long: MSIQVFCDFDGTITNNDNIMSIMEKFAPPEAEEVKNKILSQELSIQEGVSQLFQLIPTNLHDDIIQFLIETAEIRSGFHEFIQFVKENNISFYVISGGMDFFVYPLLQGIIPKEQIYCNETDFSAEFITVKWPHSCDDHCQIHCGLCKSSLIRKLSDTDDFHIVIGDSITDLQAAKQADKVFARDFLITKCEENHIAYTPFETFQDVQAELKLLLEVKA.

It belongs to the HAD-like hydrolase superfamily. MtnX family.

The enzyme catalyses 2-hydroxy-5-methylsulfanyl-3-oxopent-1-enyl phosphate + H2O = 1,2-dihydroxy-5-(methylsulfanyl)pent-1-en-3-one + phosphate. It participates in amino-acid biosynthesis; L-methionine biosynthesis via salvage pathway; L-methionine from S-methyl-5-thio-alpha-D-ribose 1-phosphate: step 4/6. Functionally, dephosphorylates 2-hydroxy-3-keto-5-methylthiopentenyl-1-phosphate (HK-MTPenyl-1-P) yielding 1,2-dihydroxy-3-keto-5-methylthiopentene (DHK-MTPene). The sequence is that of 2-hydroxy-3-keto-5-methylthiopentenyl-1-phosphate phosphatase from Bacillus cereus (strain ATCC 14579 / DSM 31 / CCUG 7414 / JCM 2152 / NBRC 15305 / NCIMB 9373 / NCTC 2599 / NRRL B-3711).